A 90-amino-acid chain; its full sequence is Putative sodium channel toxin Ts35 (90 aa).

Residues 1–22 form the signal peptide; sequence QDEVGLGSCSVIFVVGNEEGEA. In terms of domain architecture, LCN-type CS-alpha/beta spans 23 to 87; the sequence is KDGYAVGGDR…WGNPTLGPCL (65 aa). 4 cysteine pairs are disulfide-bonded: C33-C86, C37-C61, C46-C66, and C50-C68.

Belongs to the long (4 C-C) scorpion toxin superfamily. Sodium channel inhibitor family. Expressed by the venom gland.

The protein localises to the secreted. Putative sodium channel toxin. This chain is Putative sodium channel toxin Ts35, found in Tityus serrulatus (Brazilian scorpion).